We begin with the raw amino-acid sequence, 467 residues long: Adenosylhomocysteinase (467 aa).

Residues threonine 68, aspartate 144, and glutamate 169 each contribute to the substrate site. 170-172 serves as a coordination point for NAD(+); it reads TTT. Residues lysine 199 and aspartate 203 each contribute to the substrate site. NAD(+) contacts are provided by residues asparagine 204, 233-238, glutamate 256, asparagine 305, 326-328, and asparagine 373; these read GYGDVG and IGH.

It belongs to the adenosylhomocysteinase family. Requires NAD(+) as cofactor.

Its subcellular location is the cytoplasm. The catalysed reaction is S-adenosyl-L-homocysteine + H2O = L-homocysteine + adenosine. It participates in amino-acid biosynthesis; L-homocysteine biosynthesis; L-homocysteine from S-adenosyl-L-homocysteine: step 1/1. In terms of biological role, may play a key role in the regulation of the intracellular concentration of adenosylhomocysteine. The chain is Adenosylhomocysteinase from Acinetobacter baylyi (strain ATCC 33305 / BD413 / ADP1).